Here is a 467-residue protein sequence, read N- to C-terminus: ATP-dependent protease ATPase subunit HslU (467 aa).

ATP contacts are provided by residues valine 22 and 64 to 69 (GVGKTE). The disordered stretch occupies residues 149 to 192 (QTNNPLESLFGGAIPNFGQNNEDEEEPPTEEIKTKRSEIKRQLE). The span at 178–192 (EEIKTKRSEIKRQLE) shows a compositional bias: basic and acidic residues. The ATP site is built by aspartate 280, glutamate 345, and arginine 417.

This sequence belongs to the ClpX chaperone family. HslU subfamily. A double ring-shaped homohexamer of HslV is capped on each side by a ring-shaped HslU homohexamer. The assembly of the HslU/HslV complex is dependent on binding of ATP.

It localises to the cytoplasm. In terms of biological role, ATPase subunit of a proteasome-like degradation complex; this subunit has chaperone activity. The binding of ATP and its subsequent hydrolysis by HslU are essential for unfolding of protein substrates subsequently hydrolyzed by HslV. HslU recognizes the N-terminal part of its protein substrates and unfolds these before they are guided to HslV for hydrolysis. The sequence is that of ATP-dependent protease ATPase subunit HslU from Staphylococcus aureus (strain MW2).